The primary structure comprises 420 residues: Gamma-glutamyl phosphate reductase (420 aa).

It belongs to the gamma-glutamyl phosphate reductase family.

It is found in the cytoplasm. The enzyme catalyses L-glutamate 5-semialdehyde + phosphate + NADP(+) = L-glutamyl 5-phosphate + NADPH + H(+). Its pathway is amino-acid biosynthesis; L-proline biosynthesis; L-glutamate 5-semialdehyde from L-glutamate: step 2/2. Its function is as follows. Catalyzes the NADPH-dependent reduction of L-glutamate 5-phosphate into L-glutamate 5-semialdehyde and phosphate. The product spontaneously undergoes cyclization to form 1-pyrroline-5-carboxylate. In Pasteurella multocida (strain Pm70), this protein is Gamma-glutamyl phosphate reductase.